A 136-amino-acid chain; its full sequence is Ribonuclease P protein component (136 aa).

Belongs to the RnpA family. Consists of a catalytic RNA component (M1 or rnpB) and a protein subunit.

The catalysed reaction is Endonucleolytic cleavage of RNA, removing 5'-extranucleotides from tRNA precursor.. In terms of biological role, RNaseP catalyzes the removal of the 5'-leader sequence from pre-tRNA to produce the mature 5'-terminus. It can also cleave other RNA substrates such as 4.5S RNA. The protein component plays an auxiliary but essential role in vivo by binding to the 5'-leader sequence and broadening the substrate specificity of the ribozyme. The chain is Ribonuclease P protein component from Arthrobacter sp. (strain FB24).